Reading from the N-terminus, the 633-residue chain is Keratin, type II cytoskeletal 2 epidermal (633 aa).

The segment at methionine 1–glutamine 189 is head. Arginine 18 carries the asymmetric dimethylarginine modification. Serine 21, serine 24, and serine 60 each carry phosphoserine. The interval glutamate 190 to leucine 225 is coil 1A. The IF rod domain occupies glutamate 190 to methionine 503. Residues glutamine 226–tyrosine 244 form a linker 1 region. The segment at isoleucine 245–methionine 336 is coil 1B. The interval glutamine 337–isoleucine 360 is linker 12. Residues isoleucine 361 to glutamate 499 form a coil 2 region. A tail region spans residues glutamate 500–arginine 633. The segment covering serine 518 to arginine 527 has biased composition (low complexity). Residues serine 518–arginine 633 form a disordered region. A compositionally biased stretch (gly residues) spans glycine 528 to glycine 613. Arginine 588 and arginine 612 each carry omega-N-methylarginine.

It belongs to the intermediate filament family. Heterotetramer of two type I and two type II keratins. Associates with KRT10.

The protein localises to the cytoplasm. Functionally, probably contributes to terminal cornification. Associated with keratinocyte activation, proliferation and keratinization. Required for maintenance of corneocytes and keratin filaments in suprabasal keratinocytes in the epidermis of the ear, potentially via moderation of expression and localization of keratins and their partner proteins. Plays a role in the establishment of the epidermal barrier on plantar skin. The chain is Keratin, type II cytoskeletal 2 epidermal (KRT2) from Canis lupus familiaris (Dog).